The primary structure comprises 163 residues: Adenosine 5'-monophosphoramidase HINT2 (163 aa).

The N-terminal 17 residues, 1–17 (MAAAVVLAAGLRAARRA), are a transit peptide targeting the mitochondrion. The HIT domain occupies 55 to 163 (IFSRILDKSL…GGRQLQWPPG (109 aa)). AMP-binding residues include Ser-63 and Asp-80. An N6-acetyllysine modification is found at Lys-119. Residue Asn-136 coordinates AMP. The residue at position 139 (Lys-139) is an N6-acetyllysine. AMP-binding positions include 142–145 (AQSV) and 149–151 (HIH). The short motif at 147–151 (HLHIH) is the Histidine triad motif element. The active-site Tele-AMP-histidine intermediate is the His-149.

Belongs to the HINT family. In terms of tissue distribution, high expression in liver and pancreas. Expression is significantly down-regulated in hepatocellular carcinoma (HCC) patients.

It localises to the mitochondrion. The enzyme catalyses adenosine 5'-phosphoramidate + H2O = AMP + NH4(+). Functionally, exhibits adenosine 5'-monophosphoramidase activity, hydrolyzing purine nucleotide phosphoramidates with a single phosphate group such as adenosine 5'monophosphoramidate (AMP-NH2) to yield AMP and NH2. Hydrolyzes adenosine 5'-O-p-nitrophenylphosphoramidate (AMP-pNA). Hydrolyzes fluorogenic purine nucleoside tryptamine phosphoramidates in vitro. May be involved in steroid biosynthesis. May play a role in apoptosis. In Homo sapiens (Human), this protein is Adenosine 5'-monophosphoramidase HINT2.